Consider the following 237-residue polypeptide: MVAERYTVDLNKPLVFQVGHLGEEYQEWIHQPIVCVEGPRFFESDFWEFLTRTVWWAIPTIWLPVVCYVLSISASKGLTFPQIGLIVAFGVLTWTLLEYTLHRFLFHIQTKSYWANTAHYLLHGCHHKHPQDGLRLVFPPTATAILLVPLWKLLHLLATPATAPAILGGILFGYVMYDITHYYLHHGQPKEPTFKHLKKYHLNHHFRIQDKGYGITSSLWDKVFGTLPGIKAAAKKS.

The next 2 membrane-spanning stretches (helical) occupy residues 54-74 and 77-97; these read VWWA…SISA and GLTF…WTLL. Residues histidine 102, histidine 107, histidine 123, histidine 126, and histidine 127 each contribute to the Zn(2+) site. Transmembrane regions (helical) follow at residues 134 to 154 and 156 to 176; these read LRLV…WKLL and LLAT…GYVM. 5 residues coordinate Zn(2+): histidine 181, histidine 185, histidine 201, histidine 204, and histidine 205.

This sequence belongs to the sterol desaturase family. In terms of assembly, interacts with CYTB5-A, CYTB5-B, CYTB5-C and CYTB5-D. It depends on Zn(2+) as a cofactor. As to expression, expressed in leaves, roots, flowers and seeds.

The protein localises to the endoplasmic reticulum membrane. It carries out the reaction an N-(1,2-saturated acyl)sphinganine + 2 Fe(II)-[cytochrome b5] + O2 + 2 H(+) = an N-[(2'R)-hydroxyacyl]sphinganine + 2 Fe(III)-[cytochrome b5] + H2O. Fatty acid 2-hydroxylase involved in the alpha-hydroxylation of the long-chain fatty acid (LCFA) palmitic acid. Probably involved in the resistance response to oxidative stress. This chain is Dihydroceramide fatty acyl 2-hydroxylase FAH2, found in Arabidopsis thaliana (Mouse-ear cress).